Reading from the N-terminus, the 84-residue chain is ATP synthase subunit c (84 aa).

A run of 2 helical transmembrane segments spans residues 1 to 21 (MLAW…ALVG) and 53 to 73 (LLFA…VALI).

The protein belongs to the ATPase C chain family. F-type ATPases have 2 components, F(1) - the catalytic core - and F(0) - the membrane proton channel. F(1) has five subunits: alpha(3), beta(3), gamma(1), delta(1), epsilon(1). F(0) has three main subunits: a(1), b(2) and c(10-14). The alpha and beta chains form an alternating ring which encloses part of the gamma chain. F(1) is attached to F(0) by a central stalk formed by the gamma and epsilon chains, while a peripheral stalk is formed by the delta and b chains.

The protein localises to the cell inner membrane. In terms of biological role, f(1)F(0) ATP synthase produces ATP from ADP in the presence of a proton or sodium gradient. F-type ATPases consist of two structural domains, F(1) containing the extramembraneous catalytic core and F(0) containing the membrane proton channel, linked together by a central stalk and a peripheral stalk. During catalysis, ATP synthesis in the catalytic domain of F(1) is coupled via a rotary mechanism of the central stalk subunits to proton translocation. Key component of the F(0) channel; it plays a direct role in translocation across the membrane. A homomeric c-ring of between 10-14 subunits forms the central stalk rotor element with the F(1) delta and epsilon subunits. The protein is ATP synthase subunit c of Dictyoglomus thermophilum (strain ATCC 35947 / DSM 3960 / H-6-12).